Consider the following 102-residue polypeptide: Citrate lyase acyl carrier protein (102 aa).

The residue at position 14 (Ser-14) is an O-(phosphoribosyl dephospho-coenzyme A)serine.

The protein belongs to the CitD family. In terms of assembly, oligomer with a subunit composition of (alpha,beta,gamma)6.

Its subcellular location is the cytoplasm. Covalent carrier of the coenzyme of citrate lyase. This is Citrate lyase acyl carrier protein from Streptococcus equi subsp. zooepidemicus (strain MGCS10565).